Reading from the N-terminus, the 280-residue chain is MPSDREKQRILRERRQAKMAKGGASDRLNKILSQGSSVKTSAVSVLDQPQPADHDPEGMDISTIASKPTPEPELDIDAMLNSVLGGNMGAGGAANGDPGSDPFTQMMMNMMQGGGPEGMLGQEGGTNPMSANMEYQQQLIAYNLYQQRKVRHRFLVVRMVSILANFVYHFLTISDFSFSPSANPFIRSIPPTSSVSSFFQIFVAIEAVLVAAYIAASRNVPSNNNGLLVKGISMAAMFVPKLQRFQPLIMKIIGCWDTVTFVLNDLGLVVLLFGLISFRR.

Residues 1-149 lie on the Cytoplasmic side of the membrane; sequence MPSDREKQRI…IAYNLYQQRK (149 aa). The segment at 15–59 is disordered; sequence RQAKMAKGGASDRLNKILSQGSSVKTSAVSVLDQPQPADHDPEGM. Residues 31–43 are compositionally biased toward polar residues; the sequence is ILSQGSSVKTSAV. Residues 150–170 traverse the membrane as a helical segment; the sequence is VRHRFLVVRMVSILANFVYHF. Topologically, residues 171-197 are lumenal; the sequence is LTISDFSFSPSANPFIRSIPPTSSVSS. Residues 198 to 217 form a helical membrane-spanning segment; the sequence is FFQIFVAIEAVLVAAYIAAS. Over 218–257 the chain is Cytoplasmic; the sequence is RNVPSNNNGLLVKGISMAAMFVPKLQRFQPLIMKIIGCWD. Residues 258–278 traverse the membrane as a helical segment; that stretch reads TVTFVLNDLGLVVLLFGLISF. Topologically, residues 279 to 280 are lumenal; that stretch reads RR.

It belongs to the GET2 family. As to quaternary structure, component of the Golgi to ER traffic (GET) complex, which is composed of GET1, GET2 and GET3. Within the complex, GET1 and GET2 form a heterotetramer which is stabilized by phosphatidylinositol binding and which binds to the GET3 homodimer.

Its subcellular location is the endoplasmic reticulum membrane. The protein localises to the golgi apparatus membrane. Its function is as follows. Required for the post-translational delivery of tail-anchored (TA) proteins to the endoplasmic reticulum. Together with GET1, acts as a membrane receptor for soluble GET3, which recognizes and selectively binds the transmembrane domain of TA proteins in the cytosol. The GET complex cooperates with the HDEL receptor ERD2 to mediate the ATP-dependent retrieval of resident ER proteins that contain a C-terminal H-D-E-L retention signal from the Golgi to the ER. This is Golgi to ER traffic protein 2 from Meyerozyma guilliermondii (strain ATCC 6260 / CBS 566 / DSM 6381 / JCM 1539 / NBRC 10279 / NRRL Y-324) (Yeast).